A 285-amino-acid polypeptide reads, in one-letter code: RNase adapter protein RapZ (285 aa).

Residue 8-15 (GRSGSGKS) participates in ATP binding. Residue 56 to 59 (DVRN) coordinates GTP. Positions 266 to 285 (RSRGKNVQSRHRTLEKRKPS) are RNA-binding.

The protein belongs to the RapZ-like family. RapZ subfamily. In terms of assembly, homotrimer.

Its function is as follows. Modulates the synthesis of GlmS, by affecting the processing and stability of the regulatory small RNA GlmZ. When glucosamine-6-phosphate (GlcN6P) concentrations are high in the cell, RapZ binds GlmZ and targets it to cleavage by RNase E. Consequently, GlmZ is inactivated and unable to activate GlmS synthesis. Under low GlcN6P concentrations, RapZ is sequestered and inactivated by an other regulatory small RNA, GlmY, preventing GlmZ degradation and leading to synthesis of GlmS. This chain is RNase adapter protein RapZ, found in Pectobacterium atrosepticum (strain SCRI 1043 / ATCC BAA-672) (Erwinia carotovora subsp. atroseptica).